A 109-amino-acid polypeptide reads, in one-letter code: MEGDTISRMMGSGVQMDGKILQTFEKSFVQVQNILDHNRLLINEINQNHESKIPDNLGRNVGLIRELNNNVRRVAHLYVDLSNNFSKSMEASSEGDSSEGRGNRRIRPA.

The tract at residues 88–109 (SMEASSEGDSSEGRGNRRIRPA) is disordered.

Belongs to the EARLY FLOWERING 4 family. As to quaternary structure, homodimer.

The protein resides in the nucleus. Component of the central CCA1/LHY-TOC1 feedback loop in the circadian clock that promotes clock accuracy and is required for sustained rhythms in the absence of daily light/dark cycles. The chain is Protein ELF4-LIKE 3 (EFL3) from Arabidopsis thaliana (Mouse-ear cress).